Here is a 130-residue protein sequence, read N- to C-terminus: MDTMDTMGRHVIAELWDCDFDKLNDMPFIEQLFVDAALRAGAEVREVAFHKFAPQGVSGVVIISESHLTIHSFPEHGYASIDVYTCGDRIDPNVAAEYIAEGLNAKTRESIELPRGTGSFEIKQRETKAL.

Catalysis depends on Ser-66, which acts as the Schiff-base intermediate with substrate; via pyruvic acid. Ser-66 bears the Pyruvic acid (Ser); by autocatalysis mark. His-71 (proton acceptor; for processing activity) is an active-site residue. The active-site Proton donor; for catalytic activity is Cys-86.

This sequence belongs to the prokaryotic AdoMetDC family. Type 1 subfamily. In terms of assembly, heterotetramer of two alpha and two beta chains arranged as a dimer of alpha/beta heterodimers. It depends on pyruvate as a cofactor. Post-translationally, is synthesized initially as an inactive proenzyme. Formation of the active enzyme involves a self-maturation process in which the active site pyruvoyl group is generated from an internal serine residue via an autocatalytic post-translational modification. Two non-identical subunits are generated from the proenzyme in this reaction, and the pyruvate is formed at the N-terminus of the alpha chain, which is derived from the carboxyl end of the proenzyme. The post-translation cleavage follows an unusual pathway, termed non-hydrolytic serinolysis, in which the side chain hydroxyl group of the serine supplies its oxygen atom to form the C-terminus of the beta chain, while the remainder of the serine residue undergoes an oxidative deamination to produce ammonia and the pyruvoyl group blocking the N-terminus of the alpha chain.

The enzyme catalyses S-adenosyl-L-methionine + H(+) = S-adenosyl 3-(methylsulfanyl)propylamine + CO2. It participates in amine and polyamine biosynthesis; S-adenosylmethioninamine biosynthesis; S-adenosylmethioninamine from S-adenosyl-L-methionine: step 1/1. In terms of biological role, catalyzes the decarboxylation of S-adenosylmethionine to S-adenosylmethioninamine (dcAdoMet), the propylamine donor required for the synthesis of the polyamines spermine and spermidine from the diamine putrescine. This Bacillus cytotoxicus (strain DSM 22905 / CIP 110041 / 391-98 / NVH 391-98) protein is S-adenosylmethionine decarboxylase proenzyme.